A 267-amino-acid chain; its full sequence is NAD-capped RNA hydrolase NudC (267 aa).

Arginine 70 provides a ligand contact to substrate. Zn(2+) is bound by residues cysteine 99 and cysteine 102. Glutamate 112 is a binding site for substrate. Residues cysteine 117 and cysteine 122 each contribute to the Zn(2+) site. Residue tyrosine 127 participates in substrate binding. The Nudix hydrolase domain maps to 128 to 257 (PVICPSIIVA…TIARALIEAT (130 aa)). 3 residues coordinate a divalent metal cation: alanine 166, glutamate 182, and glutamate 186. The Nudix box motif lies at 167–188 (GFVEVGESFEQTIHREVFEETG). Residue 200-207 (QPWAFPNS) coordinates substrate. Residue glutamate 227 coordinates a divalent metal cation. Alanine 250 provides a ligand contact to substrate.

This sequence belongs to the Nudix hydrolase family. NudC subfamily. As to quaternary structure, homodimer. The cofactor is Mg(2+). It depends on Mn(2+) as a cofactor. Zn(2+) serves as cofactor.

It carries out the reaction a 5'-end NAD(+)-phospho-ribonucleoside in mRNA + H2O = a 5'-end phospho-adenosine-phospho-ribonucleoside in mRNA + beta-nicotinamide D-ribonucleotide + 2 H(+). The enzyme catalyses NAD(+) + H2O = beta-nicotinamide D-ribonucleotide + AMP + 2 H(+). The catalysed reaction is NADH + H2O = reduced beta-nicotinamide D-ribonucleotide + AMP + 2 H(+). In terms of biological role, mRNA decapping enzyme that specifically removes the nicotinamide adenine dinucleotide (NAD) cap from a subset of mRNAs by hydrolyzing the diphosphate linkage to produce nicotinamide mononucleotide (NMN) and 5' monophosphate mRNA. The NAD-cap is present at the 5'-end of some mRNAs and stabilizes RNA against 5'-processing. Has preference for mRNAs with a 5'-end purine. Catalyzes the hydrolysis of a broad range of dinucleotide pyrophosphates. This chain is NAD-capped RNA hydrolase NudC, found in Mannheimia succiniciproducens (strain KCTC 0769BP / MBEL55E).